The primary structure comprises 511 residues: GMP synthase [glutamine-hydrolyzing] (511 aa).

Residues M5–D195 enclose the Glutamine amidotransferase type-1 domain. C82 (nucleophile) is an active-site residue. Active-site residues include H169 and E171. The 191-residue stretch at W196 to R386 folds into the GMPS ATP-PPase domain. Residue S223–S229 coordinates ATP.

In terms of assembly, homodimer.

The catalysed reaction is XMP + L-glutamine + ATP + H2O = GMP + L-glutamate + AMP + diphosphate + 2 H(+). It participates in purine metabolism; GMP biosynthesis; GMP from XMP (L-Gln route): step 1/1. Catalyzes the synthesis of GMP from XMP. The chain is GMP synthase [glutamine-hydrolyzing] from Ruminiclostridium cellulolyticum (strain ATCC 35319 / DSM 5812 / JCM 6584 / H10) (Clostridium cellulolyticum).